Here is a 270-residue protein sequence, read N- to C-terminus: 3-methyl-2-oxobutanoate hydroxymethyltransferase (270 aa).

Mg(2+) contacts are provided by Asp-50 and Asp-89. 3-methyl-2-oxobutanoate contacts are provided by residues 50 to 51 (DS), Asp-89, and Lys-118. Glu-120 is a Mg(2+) binding site. The Proton acceptor role is filled by Glu-187.

This sequence belongs to the PanB family. Homodecamer; pentamer of dimers. Requires Mg(2+) as cofactor.

It is found in the cytoplasm. It catalyses the reaction 3-methyl-2-oxobutanoate + (6R)-5,10-methylene-5,6,7,8-tetrahydrofolate + H2O = 2-dehydropantoate + (6S)-5,6,7,8-tetrahydrofolate. It functions in the pathway cofactor biosynthesis; (R)-pantothenate biosynthesis; (R)-pantoate from 3-methyl-2-oxobutanoate: step 1/2. Functionally, catalyzes the reversible reaction in which hydroxymethyl group from 5,10-methylenetetrahydrofolate is transferred onto alpha-ketoisovalerate to form ketopantoate. This is 3-methyl-2-oxobutanoate hydroxymethyltransferase from Helicobacter pylori (strain ATCC 700392 / 26695) (Campylobacter pylori).